Here is an 87-residue protein sequence, read N- to C-terminus: Small ribosomal subunit protein uS19 (87 aa).

Belongs to the universal ribosomal protein uS19 family.

Protein S19 forms a complex with S13 that binds strongly to the 16S ribosomal RNA. This is Small ribosomal subunit protein uS19 (rpsS) from Mycoplasma genitalium (strain ATCC 33530 / DSM 19775 / NCTC 10195 / G37) (Mycoplasmoides genitalium).